The following is a 105-amino-acid chain: uncharacterized protein (105 aa).

The segment at 1–27 (MQSPAMKRIKSSSHSRWDGSGSVNEMP) is disordered.

It localises to the mitochondrion. This is an uncharacterized protein from Arabidopsis thaliana (Mouse-ear cress).